We begin with the raw amino-acid sequence, 211 residues long: Shikimate kinase (211 aa).

Low complexity predominate over residues 1-13 (MNASANLCAASAN). Residues 1–24 (MNASANLCAASANDPQPGDQEAAH) form a disordered region. ATP is bound at residue 50-55 (GAGKTT). Thr-54 contacts Mg(2+). Positions 72, 96, and 118 each coordinate substrate. Residue Arg-156 participates in ATP binding. Residue Arg-175 participates in substrate binding.

It belongs to the shikimate kinase family. As to quaternary structure, monomer. Mg(2+) is required as a cofactor.

It localises to the cytoplasm. It carries out the reaction shikimate + ATP = 3-phosphoshikimate + ADP + H(+). Its pathway is metabolic intermediate biosynthesis; chorismate biosynthesis; chorismate from D-erythrose 4-phosphate and phosphoenolpyruvate: step 5/7. Catalyzes the specific phosphorylation of the 3-hydroxyl group of shikimic acid using ATP as a cosubstrate. In Bordetella parapertussis (strain 12822 / ATCC BAA-587 / NCTC 13253), this protein is Shikimate kinase.